The primary structure comprises 371 residues: Terpene cyclase 6 (371 aa).

Positions 144, 266, 270, and 274 each coordinate Mg(2+). The D(D/E)XX(D/E) motif motif lies at 144–148 (DDVME). The short motif at 266-274 (NDLYSYDKE) is the NSE motif element. A WxxxxxRY motif motif is present at residues 352-359 (HHATLGRY). Arg-358 and Tyr-359 together coordinate (2E,6E)-farnesyl diphosphate.

The protein belongs to the terpene synthase family. In terms of assembly, homodimer. Mg(2+) serves as cofactor.

The catalysed reaction is (2E,6E)-farnesyl diphosphate + H2O = (-)-alpha-acorenol + diphosphate. It functions in the pathway sesquiterpene biosynthesis. In terms of biological role, terpene cyclase that catalyzes the cyclization of farnesyl diphosphate (FPP) to the spirocyclic sesquiterpene alpha-acorenol. The protein is Terpene cyclase 6 of Gibberella fujikuroi (strain CBS 195.34 / IMI 58289 / NRRL A-6831) (Bakanae and foot rot disease fungus).